Consider the following 62-residue polypeptide: High-potential iron-sulfur protein (62 aa).

The [4Fe-4S] cluster site is built by Cys22, Cys25, Cys40, and Cys55.

The protein belongs to the high-potential iron-sulfur protein (HiPIP) family. Homodimer.

Specific class of high-redox-potential 4Fe-4S ferredoxins. Functions in anaerobic electron transport in most purple and in some other photosynthetic bacteria and in at least one genus (Paracoccus) of halophilic, denitrifying bacteria. This chain is High-potential iron-sulfur protein (hip), found in Rhodocyclus tenuis (Rhodospirillum tenue).